The following is a 179-amino-acid chain: Large ribosomal subunit protein uL6 (179 aa).

It belongs to the universal ribosomal protein uL6 family. In terms of assembly, part of the 50S ribosomal subunit.

This protein binds to the 23S rRNA, and is important in its secondary structure. It is located near the subunit interface in the base of the L7/L12 stalk, and near the tRNA binding site of the peptidyltransferase center. The sequence is that of Large ribosomal subunit protein uL6 from Crocosphaera subtropica (strain ATCC 51142 / BH68) (Cyanothece sp. (strain ATCC 51142)).